A 303-amino-acid polypeptide reads, in one-letter code: Nucleotide-binding protein SAR0820 (303 aa).

Residue 18 to 25 (GLSGAGKS) participates in ATP binding. Position 69 to 72 (69 to 72 (DLRG)) interacts with GTP.

This sequence belongs to the RapZ-like family.

Functionally, displays ATPase and GTPase activities. The polypeptide is Nucleotide-binding protein SAR0820 (Staphylococcus aureus (strain MRSA252)).